Reading from the N-terminus, the 295-residue chain is Ethanolamine ammonia-lyase small subunit (295 aa).

Residues valine 207, glutamate 228, and cysteine 258 each coordinate adenosylcob(III)alamin.

It belongs to the EutC family. The basic unit is a heterodimer which dimerizes to form tetramers. The heterotetramers trimerize; 6 large subunits form a core ring with 6 small subunits projecting outwards. It depends on adenosylcob(III)alamin as a cofactor.

Its subcellular location is the bacterial microcompartment. The catalysed reaction is ethanolamine = acetaldehyde + NH4(+). Its pathway is amine and polyamine degradation; ethanolamine degradation. Its function is as follows. Catalyzes the deamination of various vicinal amino-alcohols to oxo compounds. Allows this organism to utilize ethanolamine as the sole source of nitrogen and carbon in the presence of external vitamin B12. The protein is Ethanolamine ammonia-lyase small subunit of Escherichia fergusonii (strain ATCC 35469 / DSM 13698 / CCUG 18766 / IAM 14443 / JCM 21226 / LMG 7866 / NBRC 102419 / NCTC 12128 / CDC 0568-73).